The primary structure comprises 1071 residues: ATP-dependent helicase/deoxyribonuclease subunit B (1071 aa).

The protein belongs to the helicase family. AddB/RexB type 2 subfamily. As to quaternary structure, heterodimer of AddA and RexB. Mg(2+) is required as a cofactor.

The heterodimer acts as both an ATP-dependent DNA helicase and an ATP-dependent, dual-direction single-stranded exonuclease. Recognizes the chi site generating a DNA molecule suitable for the initiation of homologous recombination. This subunit has 5' -&gt; 3' nuclease activity but not helicase activity. The polypeptide is ATP-dependent helicase/deoxyribonuclease subunit B (Streptococcus pyogenes serotype M12 (strain MGAS9429)).